A 170-amino-acid chain; its full sequence is Lipoprotein signal peptidase (170 aa).

The next 5 membrane-spanning stretches (helical) occupy residues 13–33, 72–92, 96–113, 116–136, and 142–162; these read IFISILVFFDQWSKYLVVTYV, LFFLIIPIIILVFVFSFSLKE, VSRFALILILSGGIGNII, LFRPLGVVDFLDVKFFGIFGL, and FNFADSYVVVGMIVFIIYDLF. Catalysis depends on residues Asp-124 and Asp-146.

Belongs to the peptidase A8 family.

It localises to the cell inner membrane. The catalysed reaction is Release of signal peptides from bacterial membrane prolipoproteins. Hydrolyzes -Xaa-Yaa-Zaa-|-(S,diacylglyceryl)Cys-, in which Xaa is hydrophobic (preferably Leu), and Yaa (Ala or Ser) and Zaa (Gly or Ala) have small, neutral side chains.. Its pathway is protein modification; lipoprotein biosynthesis (signal peptide cleavage). Functionally, this protein specifically catalyzes the removal of signal peptides from prolipoproteins. The chain is Lipoprotein signal peptidase from Borrelia duttonii (strain Ly).